We begin with the raw amino-acid sequence, 265 residues long: Ribosomal RNA small subunit methyltransferase A (265 aa).

S-adenosyl-L-methionine is bound by residues His13, Leu15, Gly40, Glu62, Asp87, and Asn106.

Belongs to the class I-like SAM-binding methyltransferase superfamily. rRNA adenine N(6)-methyltransferase family. RsmA subfamily.

It is found in the cytoplasm. The enzyme catalyses adenosine(1518)/adenosine(1519) in 16S rRNA + 4 S-adenosyl-L-methionine = N(6)-dimethyladenosine(1518)/N(6)-dimethyladenosine(1519) in 16S rRNA + 4 S-adenosyl-L-homocysteine + 4 H(+). Functionally, specifically dimethylates two adjacent adenosines (A1518 and A1519) in the loop of a conserved hairpin near the 3'-end of 16S rRNA in the 30S particle. May play a critical role in biogenesis of 30S subunits. The chain is Ribosomal RNA small subunit methyltransferase A from Persephonella marina (strain DSM 14350 / EX-H1).